Consider the following 487-residue polypeptide: MSDDAEVTNNKKTTKSTLLDGNHIFPPFYACYLLRSKATANSNRTYVGSTPDPPRRIRQHNGELKQGAWSTSRHRPWEMQMIVYGFPSKLAALQFEWAWQKPELSRHLRIRGEDQEYYHIFTKDARRNWVERKVCVAYALISLTPFNRLPLHVRFFNHETHGIWQSIHEQAGVNTIQRGKSRAKPVNPLHLLSQSVAPAVTIILDLGGVSGTSGKRRECTKGVMSHEGPIDVKDVEFRQGFGVRGKWLEIRKRILSGQDLCCHLCQERIAFNDHLTFSICPLAESQDCFCITHLICLAKHFQDEAPVEDRRAPSQPKILPYQGLCPNCKRTVQWGQHIRACYARKEQVEKAEKAEKAEKAEKAEKAEKAEKAEKAEKAEKAGRKVRQREMKTKKGDQSNGTVAQPESIYSATPVHTTFGLSNASATLIDPSMPARSMKSKDVGGEGIRHSTHTDDSDGIISVYSETEDESESEPEWEIFEAEMMALS.

In terms of domain architecture, GIY-YIG spans 27–109; sequence PFYACYLLRS…QKPELSRHLR (83 aa). Residues 44–69 are disordered; that stretch reads RTYVGSTPDPPRRIRQHNGELKQGAW. The segment at 262 to 328 adopts an SLX1-type zinc-finger fold; it reads CHLCQERIAF…LPYQGLCPNC (67 aa). The span at 359–396 shows a compositional bias: basic and acidic residues; that stretch reads KAEKAEKAEKAEKAEKAEKAEKAGRKVRQREMKTKKGD. 2 disordered regions span residues 359–407 and 433–475; these read KAEK…QPES and PARS…SEPE. Over residues 397 to 407 the composition is skewed to polar residues; that stretch reads QSNGTVAQPES. Over residues 438–455 the composition is skewed to basic and acidic residues; the sequence is KSKDVGGEGIRHSTHTDD. Over residues 465–475 the composition is skewed to acidic residues; sequence ETEDESESEPE.

This sequence belongs to the SLX1 family. As to quaternary structure, forms a heterodimer with SLX4. A divalent metal cation serves as cofactor.

It is found in the nucleus. In terms of biological role, catalytic subunit of the SLX1-SLX4 structure-specific endonuclease that resolves DNA secondary structures generated during DNA repair and recombination. Has endonuclease activity towards branched DNA substrates, introducing single-strand cuts in duplex DNA close to junctions with ss-DNA. The sequence is that of Structure-specific endonuclease subunit SLX1 from Cryptococcus neoformans var. neoformans serotype D (strain B-3501A) (Filobasidiella neoformans).